The chain runs to 74 residues: Transcription attenuation protein MtrB (74 aa).

It belongs to the MtrB family. In terms of assembly, oligomer of 11 identical subunits arranged in doughnut-like structure.

Required for transcription attenuation control in the Trp operon. This trans-acting factor seems to recognize a 10 bases nucleotide sequence in the Trp leader transcript causing transcription termination. Binds the leader RNA only in presence of L-tryptophan. This Geobacillus stearothermophilus (Bacillus stearothermophilus) protein is Transcription attenuation protein MtrB (mtrB).